Here is a 465-residue protein sequence, read N- to C-terminus: Glutamate--tRNA ligase (465 aa).

The 'HIGH' region motif lies at 8–18; that stretch reads PSPTGYLHIGG. The short motif at 236-240 is the 'KMSKS' region element; sequence RLSKR. K239 contributes to the ATP binding site.

This sequence belongs to the class-I aminoacyl-tRNA synthetase family. Glutamate--tRNA ligase type 1 subfamily. In terms of assembly, monomer.

The protein resides in the cytoplasm. It carries out the reaction tRNA(Glu) + L-glutamate + ATP = L-glutamyl-tRNA(Glu) + AMP + diphosphate. Catalyzes the attachment of glutamate to tRNA(Glu) in a two-step reaction: glutamate is first activated by ATP to form Glu-AMP and then transferred to the acceptor end of tRNA(Glu). In Nitrosospira multiformis (strain ATCC 25196 / NCIMB 11849 / C 71), this protein is Glutamate--tRNA ligase.